The chain runs to 438 residues: 3-phosphoshikimate 1-carboxyvinyltransferase (438 aa).

3-phosphoshikimate is bound by residues K26, S27, and R31. K26 contacts phosphoenolpyruvate. Positions 99 and 127 each coordinate phosphoenolpyruvate. 6 residues coordinate 3-phosphoshikimate: S170, S171, Q172, S199, E314, and H343. Q172 contacts phosphoenolpyruvate. E314 serves as the catalytic Proton acceptor. Residues R347, R388, and K413 each coordinate phosphoenolpyruvate.

The protein belongs to the EPSP synthase family. Monomer.

Its subcellular location is the cytoplasm. The enzyme catalyses 3-phosphoshikimate + phosphoenolpyruvate = 5-O-(1-carboxyvinyl)-3-phosphoshikimate + phosphate. Its pathway is metabolic intermediate biosynthesis; chorismate biosynthesis; chorismate from D-erythrose 4-phosphate and phosphoenolpyruvate: step 6/7. Its function is as follows. Catalyzes the transfer of the enolpyruvyl moiety of phosphoenolpyruvate (PEP) to the 5-hydroxyl of shikimate-3-phosphate (S3P) to produce enolpyruvyl shikimate-3-phosphate and inorganic phosphate. The sequence is that of 3-phosphoshikimate 1-carboxyvinyltransferase from Mycobacterium sp. (strain JLS).